Here is a 447-residue protein sequence, read N- to C-terminus: N-succinylarginine dihydrolase (447 aa).

Residues 19–28, Asn110, and 137–138 contribute to the substrate site; these read AGLSFGNEAS and HR. Glu174 is a catalytic residue. Arg212 is a binding site for substrate. Residue His248 is part of the active site. Positions 250 and 359 each coordinate substrate. Cys365 acts as the Nucleophile in catalysis.

The protein belongs to the succinylarginine dihydrolase family. As to quaternary structure, homodimer.

It catalyses the reaction N(2)-succinyl-L-arginine + 2 H2O + 2 H(+) = N(2)-succinyl-L-ornithine + 2 NH4(+) + CO2. Its pathway is amino-acid degradation; L-arginine degradation via AST pathway; L-glutamate and succinate from L-arginine: step 2/5. Catalyzes the hydrolysis of N(2)-succinylarginine into N(2)-succinylornithine, ammonia and CO(2). The sequence is that of N-succinylarginine dihydrolase from Escherichia coli O81 (strain ED1a).